A 387-amino-acid chain; its full sequence is Mannitol-1-phosphate 5-dehydrogenase (387 aa).

Residue 3–14 participates in NAD(+) binding; sequence ALHFGAGNIGRG.

It belongs to the mannitol dehydrogenase family.

The enzyme catalyses D-mannitol 1-phosphate + NAD(+) = beta-D-fructose 6-phosphate + NADH + H(+). The sequence is that of Mannitol-1-phosphate 5-dehydrogenase from Yersinia pseudotuberculosis serotype O:3 (strain YPIII).